The following is a 570-amino-acid chain: Dihydroxy-acid dehydratase (570 aa).

Position 61 (C61) interacts with [2Fe-2S] cluster. A Mg(2+)-binding site is contributed by D94. Position 135 (C135) interacts with [2Fe-2S] cluster. Positions 136 and 137 each coordinate Mg(2+). K137 carries the post-translational modification N6-carboxylysine. C207 serves as a coordination point for [2Fe-2S] cluster. Position 459 (E459) interacts with Mg(2+). Residue S485 is the Proton acceptor of the active site.

Belongs to the IlvD/Edd family. Homodimer. Requires [2Fe-2S] cluster as cofactor. Mg(2+) is required as a cofactor.

It carries out the reaction (2R)-2,3-dihydroxy-3-methylbutanoate = 3-methyl-2-oxobutanoate + H2O. It catalyses the reaction (2R,3R)-2,3-dihydroxy-3-methylpentanoate = (S)-3-methyl-2-oxopentanoate + H2O. It participates in amino-acid biosynthesis; L-isoleucine biosynthesis; L-isoleucine from 2-oxobutanoate: step 3/4. The protein operates within amino-acid biosynthesis; L-valine biosynthesis; L-valine from pyruvate: step 3/4. Functionally, functions in the biosynthesis of branched-chain amino acids. Catalyzes the dehydration of (2R,3R)-2,3-dihydroxy-3-methylpentanoate (2,3-dihydroxy-3-methylvalerate) into 2-oxo-3-methylpentanoate (2-oxo-3-methylvalerate) and of (2R)-2,3-dihydroxy-3-methylbutanoate (2,3-dihydroxyisovalerate) into 2-oxo-3-methylbutanoate (2-oxoisovalerate), the penultimate precursor to L-isoleucine and L-valine, respectively. This Lactococcus lactis subsp. cremoris (strain SK11) protein is Dihydroxy-acid dehydratase.